Here is a 66-residue protein sequence, read N- to C-terminus: Photosystem II reaction center protein H (66 aa).

A helical transmembrane segment spans residues 27 to 47 (GAVPVMTVIGLLLLVFLVILL).

It belongs to the PsbH family. As to quaternary structure, PSII is composed of 1 copy each of membrane proteins PsbA, PsbB, PsbC, PsbD, PsbE, PsbF, PsbH, PsbI, PsbJ, PsbK, PsbL, PsbM, PsbT, PsbX, PsbY, Psb30/Ycf12, peripheral proteins PsbO, CyanoQ (PsbQ), PsbU, PsbV and a large number of cofactors. It forms dimeric complexes.

It localises to the cellular thylakoid membrane. In terms of biological role, one of the components of the core complex of photosystem II (PSII), required for its stability and/or assembly. PSII is a light-driven water:plastoquinone oxidoreductase that uses light energy to abstract electrons from H(2)O, generating O(2) and a proton gradient subsequently used for ATP formation. It consists of a core antenna complex that captures photons, and an electron transfer chain that converts photonic excitation into a charge separation. In Prochlorococcus marinus (strain MIT 9215), this protein is Photosystem II reaction center protein H.